The chain runs to 671 residues: Oviduct-specific glycoprotein (671 aa).

Residues 1 to 21 (MGRLLLWVGLVLLMKPNDGTA) form the signal peptide. Positions 22–385 (YKLVCYFTNW…HILNELLVRA (364 aa)) constitute a GH18 domain. Cys26 and Cys51 are joined by a disulfide. Chitin contacts are provided by residues 71 to 72 (LQ), 98 to 101 (GGWN), Tyr142, 211 to 214 (LSYD), and Trp355. N-linked (GlcNAc...) asparagine glycosylation occurs at Asn402. 8 tandem repeats follow at residues 490–504 (TGMT…AGRE), 505–519 (TMTT…PGGE), 520–534 (TMTT…PGGE), 535–549 (TVTT…PGGE), 550–564 (TMTT…PGGE), 565–579 (TVTI…PVGE), 580–594 (TVTI…PGGQ), and 595–609 (TTAT…PPGM). An 8 X 15 AA tandem repeats region spans residues 490–609 (TGMTVTVQTQ…GSQSVTPPGM (120 aa)). Asn511, Asn526, Asn541, Asn556, Asn571, and Asn586 each carry an N-linked (GlcNAc...) asparagine glycan.

This sequence belongs to the glycosyl hydrolase 18 family. In terms of processing, highly O-glycosylated and also N-glycosylated. Oviduct.

Its subcellular location is the cytoplasmic vesicle. The protein localises to the secretory vesicle. In terms of biological role, binds to oocyte zona pellucida in vivo. May play a role in the fertilization process and/or early embryonic development. Might act as a protective secretion influencing the first steps of the reproductive process necessary for the normal triggering of fertilization and early embryonic development. This chain is Oviduct-specific glycoprotein (OVGP1), found in Mesocricetus auratus (Golden hamster).